Here is a 72-residue protein sequence, read N- to C-terminus: Sec-independent protein translocase protein TatA (72 aa).

A helical transmembrane segment spans residues 1–21; it reads MLGGISIWQLLIVLAILVLIF.

Belongs to the TatA/E family. In terms of assembly, the Tat system comprises two distinct complexes: a TatABC complex, containing multiple copies of TatA, TatB and TatC subunits, and a separate TatA complex, containing only TatA subunits. Substrates initially bind to the TatABC complex, which probably triggers association of the separate TatA complex to form the active translocon.

Its subcellular location is the cell inner membrane. Functionally, part of the twin-arginine translocation (Tat) system that transports large folded proteins containing a characteristic twin-arginine motif in their signal peptide across membranes. TatA could form the protein-conducting channel of the Tat system. In Marinomonas sp. (strain MWYL1), this protein is Sec-independent protein translocase protein TatA.